A 1273-amino-acid chain; its full sequence is Paired amphipathic helix protein Sin3a (1273 aa).

Disordered regions lie at residues 1–23 and 87–110; these read MKRR…IPGS and HPTA…PPVA. S10 carries the phosphoserine modification. A PAH 1 domain is found at 119 to 189; that stretch reads QRLKVEDALS…MGFNTFLPPG (71 aa). The interaction with HCFC1 stretch occupies residues 119–196; it reads QRLKVEDALS…PPGYKIEVQT (78 aa). Glycyl lysine isopeptide (Lys-Gly) (interchain with G-Cter in SUMO2) cross-links involve residues K122 and K134. The segment at 205-297 is disordered; it reads PGQVHQIPTH…ISLGTAPSLQ (93 aa). Residues 205–480 are interaction with REST; the sequence is PGQVHQIPTH…RKALRSAEAY (276 aa). Residues 228 to 237 are compositionally biased toward low complexity; that stretch reads SQPSAQSAPA. The segment covering 238-248 has biased composition (pro residues); that stretch reads PAQPAPQPPPA. The segment covering 252-266 has biased composition (polar residues); that stretch reads KPSQLQAHTPASQQT. A compositionally biased stretch (pro residues) spans 267–282; sequence PPLPPYASPRSPPVQP. Phosphoserine is present on S277. The residue at position 284 (T284) is a Phosphothreonine. Positions 284 to 297 are enriched in polar residues; that stretch reads TPVTISLGTAPSLQ. The 84-residue stretch at 300–383 folds into the PAH 2 domain; the sequence is QPVEFNHAIN…SEFGQFLPDA (84 aa). Positions 398-446 are disordered; that stretch reads DSVRNDHGGTVKKPQLNNKPQRPSQNGCQIRRHPTGTTPPVKKKPKLLN. The segment covering 412–425 has biased composition (polar residues); it reads QLNNKPQRPSQNGC. The region spanning 456 to 525 is the PAH 3 domain; that stretch reads SKHGGGTESL…NWFKNFLGYK (70 aa). An interaction with SAP30 region spans residues 458 to 525; sequence HGGGTESLFF…NWFKNFLGYK (68 aa). At K469 the chain carries N6-acetyllysine. Positions 523-850 are interaction with NCOR1; sequence GYKESVHLET…EMDVDEATGA (328 aa). An interaction with SUDS3 and SAP130 region spans residues 524–659; the sequence is YKESVHLETY…KFRLDNTLGG (136 aa). K563 is covalently cross-linked (Glycyl lysine isopeptide (Lys-Gly) (interchain with G-Cter in SUMO2)). Positions 687-829 are interaction with HDAC1 and ARID4B; it reads NPSIAVPIVL…IPDLLFAQRG (143 aa). Phosphoserine occurs at positions 832 and 860. Residues K865 and K875 each carry the N6-acetyllysine modification. The tract at residues 888–967 is interaction with OGT; that stretch reads VNNNWYIFMR…YYPAFLDMVR (80 aa). Residues 903–932 adopt a coiled-coil conformation; that stretch reads CLRLLRICSQAERQIEEENREREWEREVLG. A phosphoserine mark is found at S940, S1089, and S1112. Residues 1136–1156 form a disordered region; sequence CQRGREQQEKEGKEGNSKKTM. Over residues 1138-1156 the composition is skewed to basic and acidic residues; the sequence is RGREQQEKEGKEGNSKKTM.

Interacts with ARID4B, BRMS1L, HCFC1, HDAC1, HDAC2, MXI1, SAP30L, SAP130, SFPQ and TOPORS. Interacts with OGT (via TPRs 1-6); the interaction mediates transcriptional repression in parallel with histone deacetylase. Interacts with BAZ2A, MXD1, MXD3, MXD4, MBD2, DACH1, NCOR1, NR4A2, REST, RLIM, SAP30, SETDB1, SMYD2, and SUDS3. Interacts with PHF12 in a complex composed of HDAC1, PHF12 and SAP30. Interacts with TET1; the interaction recruits SIN3A to gene promoters. The large PER complex involved in the histone deacetylation is composed of at least HDAC1, PER2, SFPQ and SIN3A. Interacts with KLF11. Interacts with PPHLN1. Found in a complex with YY1, GON4L and HDAC1. Interacts (via PAH2) with FOXK1. Interacts with FOXK2. Found in a complex composed of at least SINHCAF, SIN3A, HDAC1, SAP30, RBBP4, OGT and TET1. Interacts with SINHCAF. Interacts with SPHK2. In terms of processing, SUMO1 sumoylated by TOPORS. Probably desumoylated by SENP2. In terms of tissue distribution, expressed in the developing brain, with highest levels of expression detected in the ventricular zone of various cortical regions.

Its subcellular location is the nucleus. The protein resides in the nucleolus. Its function is as follows. Acts as a transcriptional repressor. Corepressor for REST. Interacts with MXI1 to repress MYC responsive genes and antagonize MYC oncogenic activities. Also interacts with MXD1-MAX heterodimers to repress transcription by tethering SIN3A to DNA. Acts cooperatively with OGT to repress transcription in parallel with histone deacetylation. Involved in the control of the circadian rhythms. Required for the transcriptional repression of circadian target genes, such as PER1, mediated by the large PER complex through histone deacetylation. Cooperates with FOXK1 to regulate cell cycle progression probably by repressing cell cycle inhibitor genes expression. Required for cortical neuron differentiation and callosal axon elongation. The protein is Paired amphipathic helix protein Sin3a of Homo sapiens (Human).